The primary structure comprises 100 residues: Urease subunit gamma (100 aa).

It belongs to the urease gamma subunit family. As to quaternary structure, heterotrimer of UreA (gamma), UreB (beta) and UreC (alpha) subunits. Three heterotrimers associate to form the active enzyme.

It localises to the cytoplasm. The catalysed reaction is urea + 2 H2O + H(+) = hydrogencarbonate + 2 NH4(+). It participates in nitrogen metabolism; urea degradation; CO(2) and NH(3) from urea (urease route): step 1/1. This is Urease subunit gamma from Burkholderia ambifaria (strain MC40-6).